The primary structure comprises 434 residues: Nicotinate phosphoribosyltransferase (434 aa).

His-242 is modified (phosphohistidine; by autocatalysis).

Belongs to the NAPRTase family. Post-translationally, transiently phosphorylated on a His residue during the reaction cycle. Phosphorylation strongly increases the affinity for substrates and increases the rate of nicotinate D-ribonucleotide production. Dephosphorylation regenerates the low-affinity form of the enzyme, leading to product release.

The catalysed reaction is nicotinate + 5-phospho-alpha-D-ribose 1-diphosphate + ATP + H2O = nicotinate beta-D-ribonucleotide + ADP + phosphate + diphosphate. It functions in the pathway cofactor biosynthesis; NAD(+) biosynthesis; nicotinate D-ribonucleotide from nicotinate: step 1/1. Catalyzes the synthesis of beta-nicotinate D-ribonucleotide from nicotinate and 5-phospho-D-ribose 1-phosphate at the expense of ATP. The chain is Nicotinate phosphoribosyltransferase from Bartonella tribocorum (strain CIP 105476 / IBS 506).